A 347-amino-acid polypeptide reads, in one-letter code: uncharacterized protein (347 aa).

The Zn(2+) site is built by C39, H65, C95, C98, C101, C109, and E152.

The protein belongs to the zinc-containing alcohol dehydrogenase family. Zn(2+) is required as a cofactor.

This is an uncharacterized protein from Escherichia coli (strain K12).